The primary structure comprises 511 residues: Glucans biosynthesis protein G (511 aa).

A signal peptide spans 1 to 22 (MMKMRWLSAAVMLTLYTSSSWA).

Belongs to the OpgD/OpgG family.

The protein localises to the periplasm. It functions in the pathway glycan metabolism; osmoregulated periplasmic glucan (OPG) biosynthesis. In terms of biological role, involved in the biosynthesis of osmoregulated periplasmic glucans (OPGs). This Escherichia coli O81 (strain ED1a) protein is Glucans biosynthesis protein G.